The primary structure comprises 227 residues: Thymidylate kinase (227 aa).

Glycine 16–threonine 23 provides a ligand contact to ATP.

It belongs to the thymidylate kinase family.

It catalyses the reaction dTMP + ATP = dTDP + ADP. Its function is as follows. Phosphorylation of dTMP to form dTDP in both de novo and salvage pathways of dTTP synthesis. The chain is Thymidylate kinase from Xanthomonas oryzae pv. oryzae (strain MAFF 311018).